A 283-amino-acid chain; its full sequence is MESGGQYENGRYKPDYYKGTQSVNVMPKKEQHNALVMNKKIISILAERDAAVKERNEAVAATKEALASRDEALEQRDKALSERDNAIMETESALNALRYRENNLNYILSCAKRGGSQRFITEESHLPNPSPISTIPPEAANTRPTKRKKESKQGKKMGEDLNRPVASPGKKSRKDWDSNDVLVTFDEMTMPVPMCTCTGTARQCYKWGNGGWQSSCCTTTLSEYPLPQMPNKRHSRVGGRKMSGSVFSRLLSRLAGEGHELSSPVDLKNYWARHGTNRYITIK.

The segment at 51-86 (AVKERNEAVAATKEALASRDEALEQRDKALSERDNA) is alanine-zipper. The stretch at 63–89 (KEALASRDEALEQRDKALSERDNAIME) forms a coiled coil. The tract at residues 122–176 (EESHLPNPSPISTIPPEAANTRPTKRKKESKQGKKMGEDLNRPVASPGKKSRKDW) is disordered. Positions 151–162 (SKQGKKMGEDLN) are enriched in basic and acidic residues.

It belongs to the BBR/BPC family. Homodimer. Heterodimer. Expressed in seedlings, leaves and pistils.

The protein localises to the nucleus. In terms of biological role, transcriptional regulator that specifically binds to GA-rich elements (GAGA-repeats) present in regulatory sequences of genes involved in developmental processes. The chain is Protein BASIC PENTACYSTEINE5 (BPC5) from Arabidopsis thaliana (Mouse-ear cress).